Here is a 513-residue protein sequence, read N- to C-terminus: ATP synthase subunit alpha (513 aa).

169-176 contacts ATP; the sequence is GDRQTGKT.

It belongs to the ATPase alpha/beta chains family. As to quaternary structure, F-type ATPases have 2 components, CF(1) - the catalytic core - and CF(0) - the membrane proton channel. CF(1) has five subunits: alpha(3), beta(3), gamma(1), delta(1), epsilon(1). CF(0) has three main subunits: a(1), b(2) and c(9-12). The alpha and beta chains form an alternating ring which encloses part of the gamma chain. CF(1) is attached to CF(0) by a central stalk formed by the gamma and epsilon chains, while a peripheral stalk is formed by the delta and b chains.

It localises to the cell inner membrane. It catalyses the reaction ATP + H2O + 4 H(+)(in) = ADP + phosphate + 5 H(+)(out). Functionally, produces ATP from ADP in the presence of a proton gradient across the membrane. The alpha chain is a regulatory subunit. The chain is ATP synthase subunit alpha from Vibrio vulnificus (strain CMCP6).